A 309-amino-acid chain; its full sequence is tRNA dimethylallyltransferase (309 aa).

11-18 contacts ATP; the sequence is GPTATGKS. Substrate is bound at residue 13-18; it reads TATGKS.

This sequence belongs to the IPP transferase family. As to quaternary structure, monomer. The cofactor is Mg(2+).

It carries out the reaction adenosine(37) in tRNA + dimethylallyl diphosphate = N(6)-dimethylallyladenosine(37) in tRNA + diphosphate. Its function is as follows. Catalyzes the transfer of a dimethylallyl group onto the adenine at position 37 in tRNAs that read codons beginning with uridine, leading to the formation of N6-(dimethylallyl)adenosine (i(6)A). This chain is tRNA dimethylallyltransferase, found in Rhodococcus jostii (strain RHA1).